A 280-amino-acid chain; its full sequence is Protein synthesis inhibitor II (280 aa).

At Ala-1 the chain carries N-acetylalanine. The active site involves Glu-174.

The protein belongs to the ribosome-inactivating protein family. Type 1 RIP subfamily.

It is found in the cytoplasm. It carries out the reaction Endohydrolysis of the N-glycosidic bond at one specific adenosine on the 28S rRNA.. In terms of biological role, inhibits the elongation phase of protein synthesis. It inactivates fungal ribosomes even more effectively than mammalian ribosomes and is thought to function as a constitutive antifungal agent in plants. In Hordeum vulgare (Barley), this protein is Protein synthesis inhibitor II (RIP30A).